The chain runs to 190 residues: Peptide methionine sulfoxide reductase A2-2 (190 aa).

The tract at residues 1–20 is disordered; that stretch reads MSNDTGADGGAANPDLGPDA. The segment covering 10-20 has biased composition (low complexity); sequence GAANPDLGPDA.

Belongs to the MsrA Met sulfoxide reductase family.

Its subcellular location is the cytoplasm. The protein localises to the cytosol. The catalysed reaction is L-methionyl-[protein] + [thioredoxin]-disulfide + H2O = L-methionyl-(S)-S-oxide-[protein] + [thioredoxin]-dithiol. The enzyme catalyses [thioredoxin]-disulfide + L-methionine + H2O = L-methionine (S)-S-oxide + [thioredoxin]-dithiol. In terms of biological role, catalyzes the reduction of methionine sulfoxide (MetSO) to methionine in proteins. Plays a protective role against oxidative stress by restoring activity to proteins that have been inactivated by methionine oxidation. MSRA family specifically reduces the MetSO S-enantiomer. The sequence is that of Peptide methionine sulfoxide reductase A2-2 (MSRA2-2) from Oryza sativa subsp. japonica (Rice).